The following is a 180-amino-acid chain: Large ribosomal subunit protein uL5 (180 aa).

The protein belongs to the universal ribosomal protein uL5 family. As to quaternary structure, part of the 50S ribosomal subunit; part of the 5S rRNA/L5/L18/L25 subcomplex. Contacts the 5S rRNA and the P site tRNA. Forms a bridge to the 30S subunit in the 70S ribosome.

This is one of the proteins that bind and probably mediate the attachment of the 5S RNA into the large ribosomal subunit, where it forms part of the central protuberance. In the 70S ribosome it contacts protein S13 of the 30S subunit (bridge B1b), connecting the 2 subunits; this bridge is implicated in subunit movement. Contacts the P site tRNA; the 5S rRNA and some of its associated proteins might help stabilize positioning of ribosome-bound tRNAs. The protein is Large ribosomal subunit protein uL5 of Mycoplasma mycoides subsp. mycoides SC (strain CCUG 32753 / NCTC 10114 / PG1).